The following is a 379-amino-acid chain: Lipid-A-disaccharide synthase (379 aa).

It belongs to the LpxB family.

The catalysed reaction is a lipid X + a UDP-2-N,3-O-bis[(3R)-3-hydroxyacyl]-alpha-D-glucosamine = a lipid A disaccharide + UDP + H(+). The protein operates within bacterial outer membrane biogenesis; LPS lipid A biosynthesis. In terms of biological role, condensation of UDP-2,3-diacylglucosamine and 2,3-diacylglucosamine-1-phosphate to form lipid A disaccharide, a precursor of lipid A, a phosphorylated glycolipid that anchors the lipopolysaccharide to the outer membrane of the cell. The chain is Lipid-A-disaccharide synthase from Aeromonas hydrophila subsp. hydrophila (strain ATCC 7966 / DSM 30187 / BCRC 13018 / CCUG 14551 / JCM 1027 / KCTC 2358 / NCIMB 9240 / NCTC 8049).